The chain runs to 161 residues: Transcriptional repressor NrdR (161 aa).

A compositionally biased stretch (polar residues) spans 1-11; the sequence is MRCPSCNSLDT. The segment at 1-20 is disordered; that stretch reads MRCPSCNSLDTQVKDSRPTE. The segment at 3 to 34 is a zinc-finger region; sequence CPSCNSLDTQVKDSRPTEDSSVIRRRRVCVTC. The region spanning 49–139 is the ATP-cone domain; sequence LTVIKRNGRR…VYRNFREAKD (91 aa).

This sequence belongs to the NrdR family. The cofactor is Zn(2+).

Negatively regulates transcription of bacterial ribonucleotide reductase nrd genes and operons by binding to NrdR-boxes. The sequence is that of Transcriptional repressor NrdR from Bradyrhizobium sp. (strain BTAi1 / ATCC BAA-1182).